The sequence spans 88 residues: Small ribosomal subunit protein bS20 (88 aa).

Residues 1–21 show a composition bias toward basic residues; sequence MANSKSAKKRALQSEKRRQHN. Residues 1 to 27 are disordered; sequence MANSKSAKKRALQSEKRRQHNASRSSM.

It belongs to the bacterial ribosomal protein bS20 family.

Binds directly to 16S ribosomal RNA. This is Small ribosomal subunit protein bS20 from Shewanella piezotolerans (strain WP3 / JCM 13877).